A 367-amino-acid chain; its full sequence is Succinyl-diaminopimelate desuccinylase (367 aa).

Residue histidine 67 coordinates Zn(2+). Residue aspartate 69 is part of the active site. Aspartate 98 is a Zn(2+) binding site. The active-site Proton acceptor is glutamate 128. Zn(2+)-binding residues include glutamate 129, glutamate 157, and histidine 342.

It belongs to the peptidase M20A family. DapE subfamily. Homodimer. Zn(2+) is required as a cofactor. The cofactor is Co(2+).

The enzyme catalyses N-succinyl-(2S,6S)-2,6-diaminopimelate + H2O = (2S,6S)-2,6-diaminopimelate + succinate. Its pathway is amino-acid biosynthesis; L-lysine biosynthesis via DAP pathway; LL-2,6-diaminopimelate from (S)-tetrahydrodipicolinate (succinylase route): step 3/3. Its function is as follows. Catalyzes the hydrolysis of N-succinyl-L,L-diaminopimelic acid (SDAP), forming succinate and LL-2,6-diaminopimelate (DAP), an intermediate involved in the bacterial biosynthesis of lysine and meso-diaminopimelic acid, an essential component of bacterial cell walls. The chain is Succinyl-diaminopimelate desuccinylase from Campylobacter hominis (strain ATCC BAA-381 / DSM 21671 / CCUG 45161 / LMG 19568 / NCTC 13146 / CH001A).